Here is a 173-residue protein sequence, read N- to C-terminus: Shikimate kinase 1 (173 aa).

14–19 is a binding site for ATP; that stretch reads GAGKST. Ser-18 lines the Mg(2+) pocket. 3 residues coordinate substrate: Asp-36, Arg-60, and Gly-82. Arg-120 contributes to the ATP binding site. Residue Arg-140 coordinates substrate. Residue Gln-157 participates in ATP binding.

Belongs to the shikimate kinase family. Monomer. The cofactor is Mg(2+).

The protein resides in the cytoplasm. It catalyses the reaction shikimate + ATP = 3-phosphoshikimate + ADP + H(+). It participates in metabolic intermediate biosynthesis; chorismate biosynthesis; chorismate from D-erythrose 4-phosphate and phosphoenolpyruvate: step 5/7. Catalyzes the specific phosphorylation of the 3-hydroxyl group of shikimic acid using ATP as a cosubstrate. This Sodalis glossinidius (strain morsitans) protein is Shikimate kinase 1.